The following is a 197-amino-acid chain: Probable nicotinate-nucleotide adenylyltransferase (197 aa).

The protein belongs to the NadD family.

It carries out the reaction nicotinate beta-D-ribonucleotide + ATP + H(+) = deamido-NAD(+) + diphosphate. It functions in the pathway cofactor biosynthesis; NAD(+) biosynthesis; deamido-NAD(+) from nicotinate D-ribonucleotide: step 1/1. Functionally, catalyzes the reversible adenylation of nicotinate mononucleotide (NaMN) to nicotinic acid adenine dinucleotide (NaAD). The protein is Probable nicotinate-nucleotide adenylyltransferase of Chlorobium phaeobacteroides (strain DSM 266 / SMG 266 / 2430).